A 904-amino-acid chain; its full sequence is DNA mismatch repair protein MutS (904 aa).

Residue 654-661 participates in ATP binding; sequence GPNMAGKS.

It belongs to the DNA mismatch repair MutS family.

In terms of biological role, this protein is involved in the repair of mismatches in DNA. It is possible that it carries out the mismatch recognition step. This protein has a weak ATPase activity. The polypeptide is DNA mismatch repair protein MutS (Caulobacter sp. (strain K31)).